The following is a 329-amino-acid chain: 4-hydroxythreonine-4-phosphate dehydrogenase (329 aa).

The substrate site is built by His136 and Thr137. The a divalent metal cation site is built by His166, His211, and His266. Residues Lys274, Asn283, and Arg292 each coordinate substrate.

It belongs to the PdxA family. Homodimer. The cofactor is Zn(2+). Requires Mg(2+) as cofactor. Co(2+) serves as cofactor.

Its subcellular location is the cytoplasm. The catalysed reaction is 4-(phosphooxy)-L-threonine + NAD(+) = 3-amino-2-oxopropyl phosphate + CO2 + NADH. It functions in the pathway cofactor biosynthesis; pyridoxine 5'-phosphate biosynthesis; pyridoxine 5'-phosphate from D-erythrose 4-phosphate: step 4/5. Its function is as follows. Catalyzes the NAD(P)-dependent oxidation of 4-(phosphooxy)-L-threonine (HTP) into 2-amino-3-oxo-4-(phosphooxy)butyric acid which spontaneously decarboxylates to form 3-amino-2-oxopropyl phosphate (AHAP). The polypeptide is 4-hydroxythreonine-4-phosphate dehydrogenase (Escherichia coli O139:H28 (strain E24377A / ETEC)).